Consider the following 59-residue polypeptide: UPF0434 protein COSY_0767 (59 aa).

This sequence belongs to the UPF0434 family.

This chain is UPF0434 protein COSY_0767, found in Vesicomyosocius okutanii subsp. Calyptogena okutanii (strain HA).